The sequence spans 131 residues: Putative gamma-taxilin 2 (131 aa).

The protein belongs to the taxilin family.

This Pan troglodytes (Chimpanzee) protein is Putative gamma-taxilin 2 (TXLNGY).